The following is a 355-amino-acid chain: DNA-directed RNA polymerase subunit alpha (355 aa).

An alpha N-terminal domain (alpha-NTD) region spans residues 1–248 (MYYDDGIPVF…EQLQPFISSD (248 aa)). Positions 267-355 (YDPILLRKVD…ELARQHTDED (89 aa)) are alpha C-terminal domain (alpha-CTD).

This sequence belongs to the RNA polymerase alpha chain family. In terms of assembly, homodimer. The RNAP catalytic core consists of 2 alpha, 1 beta, 1 beta' and 1 omega subunit. When a sigma factor is associated with the core the holoenzyme is formed, which can initiate transcription.

It catalyses the reaction RNA(n) + a ribonucleoside 5'-triphosphate = RNA(n+1) + diphosphate. Its function is as follows. DNA-dependent RNA polymerase catalyzes the transcription of DNA into RNA using the four ribonucleoside triphosphates as substrates. The protein is DNA-directed RNA polymerase subunit alpha of Wolbachia sp. subsp. Brugia malayi (strain TRS).